The chain runs to 124 residues: Glutaredoxin-2 (124 aa).

C13 and C16 are disulfide-bonded.

This sequence belongs to the glutaredoxin family. Homodimer.

It localises to the host cytoplasm. Its function is as follows. Glutaredoxin necessary for virion morphogenesis and virus replication. Functions as a thiol-disulfide transfer protein between membrane-associated OPG128 and substrates OPG095 or OPG053. The complete pathway for formation of disulfide bonds in intracellular virion membrane proteins sequentially involves oxidation of OPG072, OPG128 and OPG088. Exhibit thioltransferase and dehydroascorbate reductase activities in vitro. In Homo sapiens (Human), this protein is Glutaredoxin-2 (OPG088).